A 182-amino-acid chain; its full sequence is Organic solute transporter subunit beta (182 aa).

Positions 1–20 (MSGLLKYLFGCFILCLLLQG) are cleaved as a signal peptide. Residues 21–64 (KTHMTSATISKPHETIDIEKQNMTGERNSTLAQQLSFPMEDPTN) are Extracellular-facing. Residues asparagine 42 and asparagine 48 are each glycosylated (N-linked (GlcNAc...) asparagine). Residues 65-85 (WNYAILALAFVVLFLAFLILA) form a helical membrane-spanning segment. At 86-182 (QNSRANRTRK…LYTDSKEDDV (97 aa)) the chain is on the cytoplasmic side.

This sequence belongs to the OST-beta family. In terms of assembly, interacts with slc51a. The Ost-alpha/Ost-beta complex is a heterodimer composed of alpha (slc51a) and beta (slc51b) subunit; may induce the transport of slc51a from the endoplasmic reticulum to the plasma membrane. In terms of tissue distribution, expressed in liver.

Its subcellular location is the cell membrane. Its function is as follows. Essential component of the Ost-alpha/Ost-beta complex, a heterodimer that acts as the intestinal basolateral transporter responsible for bile acid export from enterocytes into portal blood. Efficiently transports the major species of bile acids. May modulate slc51a glycosylation, membrane trafficking and stability activities. Able to transport taurocholate, estrone sulfate, digoxin, and prostaglandin E(2), but not p-aminohippurate or S-dinitrophenyl glutathione. This chain is Organic solute transporter subunit beta (slc51b), found in Leucoraja erinaceus (Little skate).